The sequence spans 226 residues: LexA repressor (226 aa).

The H-T-H motif DNA-binding region spans 28 to 48 (RAEICQSLGFRSPNAAESHLR). Active-site for autocatalytic cleavage activity residues include serine 133 and lysine 170.

It belongs to the peptidase S24 family. Homodimer.

The catalysed reaction is Hydrolysis of Ala-|-Gly bond in repressor LexA.. Functionally, represses a number of genes involved in the response to DNA damage (SOS response), including recA and lexA. In the presence of single-stranded DNA, RecA interacts with LexA causing an autocatalytic cleavage which disrupts the DNA-binding part of LexA, leading to derepression of the SOS regulon and eventually DNA repair. This chain is LexA repressor, found in Halorhodospira halophila (strain DSM 244 / SL1) (Ectothiorhodospira halophila (strain DSM 244 / SL1)).